The following is a 691-amino-acid chain: DNA ligase (691 aa).

Residues 41–45 (DAEYD), 90–91 (SL), and Glu130 each bind NAD(+). Lys132 (N6-AMP-lysine intermediate) is an active-site residue. Positions 153, 190, 307, and 331 each coordinate NAD(+). Residues Cys425, Cys428, Cys443, and Cys449 each coordinate Zn(2+). Residues 610–691 (APQGVLAGKT…LHQLLEGNTR (82 aa)) enclose the BRCT domain.

Belongs to the NAD-dependent DNA ligase family. LigA subfamily. Mg(2+) is required as a cofactor. Mn(2+) serves as cofactor.

It carries out the reaction NAD(+) + (deoxyribonucleotide)n-3'-hydroxyl + 5'-phospho-(deoxyribonucleotide)m = (deoxyribonucleotide)n+m + AMP + beta-nicotinamide D-nucleotide.. Its function is as follows. DNA ligase that catalyzes the formation of phosphodiester linkages between 5'-phosphoryl and 3'-hydroxyl groups in double-stranded DNA using NAD as a coenzyme and as the energy source for the reaction. It is essential for DNA replication and repair of damaged DNA. This chain is DNA ligase, found in Burkholderia multivorans (strain ATCC 17616 / 249).